A 213-amino-acid chain; its full sequence is Guanylate kinase (213 aa).

Positions 10-189 (GLLLMVVAPS…AYADLAHIYH (180 aa)) constitute a Guanylate kinase-like domain. 17 to 24 (APSGVGKT) serves as a coordination point for ATP.

Belongs to the guanylate kinase family.

It is found in the cytoplasm. It carries out the reaction GMP + ATP = GDP + ADP. In terms of biological role, essential for recycling GMP and indirectly, cGMP. This is Guanylate kinase (gmk) from Caulobacter vibrioides (strain ATCC 19089 / CIP 103742 / CB 15) (Caulobacter crescentus).